The chain runs to 109 residues: Large ribosomal subunit protein uL23 (109 aa).

The protein belongs to the universal ribosomal protein uL23 family. Part of the 50S ribosomal subunit. Contacts protein L29, and trigger factor when it is bound to the ribosome.

Functionally, one of the early assembly proteins it binds 23S rRNA. One of the proteins that surrounds the polypeptide exit tunnel on the outside of the ribosome. Forms the main docking site for trigger factor binding to the ribosome. This is Large ribosomal subunit protein uL23 from Prosthecochloris aestuarii (strain DSM 271 / SK 413).